Here is a 347-residue protein sequence, read N- to C-terminus: GTPase Obg (347 aa).

An Obg domain is found at 1-159 (MHFIDQAEIE…VRLRLELKLI (159 aa)). The 169-residue stretch at 160-328 (AEVGIVGLPN…LLQRVWQCLG (169 aa)) folds into the OBG-type G domain. GTP contacts are provided by residues 166–173 (GLPNAGKS), 191–195 (FTTLQ), 213–216 (DIPG), 280–283 (NKID), and 309–311 (SAI). 2 residues coordinate Mg(2+): Ser173 and Thr193.

It belongs to the TRAFAC class OBG-HflX-like GTPase superfamily. OBG GTPase family. In terms of assembly, monomer. Requires Mg(2+) as cofactor.

It is found in the cytoplasm. Functionally, an essential GTPase which binds GTP, GDP and possibly (p)ppGpp with moderate affinity, with high nucleotide exchange rates and a fairly low GTP hydrolysis rate. Plays a role in control of the cell cycle, stress response, ribosome biogenesis and in those bacteria that undergo differentiation, in morphogenesis control. The polypeptide is GTPase Obg (Synechococcus sp. (strain JA-2-3B'a(2-13)) (Cyanobacteria bacterium Yellowstone B-Prime)).